Consider the following 574-residue polypeptide: FAD-linked oxidoreductase sor8 (574 aa).

A signal peptide spans Met-1–Ala-27. 7 N-linked (GlcNAc...) asparagine glycosylation sites follow: Asn-58, Asn-112, Asn-136, Asn-266, Asn-312, Asn-363, and Asn-384. An FAD-binding PCMH-type domain is found at Val-126–Asn-305.

The protein belongs to the oxygen-dependent FAD-linked oxidoreductase family. FAD is required as a cofactor.

Its pathway is secondary metabolite biosynthesis. Its function is as follows. FAD-linked oxidoreductase; part of the SOR gene cluster that mediates the biosynthesis of sorbicillinoids, a diverse group of yellow secondary metabolites that restrict growth of competing pathogenic fungi but not of bacteria. Sorbicillinoids biosynthesis requires the action of two PKSs. The SOR cluster is required for the production of trichodimerol and dihydrotrichotetronin, with sor2 being sufficient for production of trichodimerol, but not dihydrotrichotetronin in the light. Sor1 iteratively combines three acetyl units and the growing chain is modified by the ketoacyl reductase subunit, and optional by the enoyl reductase subunit in the second cycle. The polyketide is then handed over to the PKS sor2, which adds three more acetyl units, and two methyl groups. Sor2 releases an aldehyde, which undergoes spontaneous cyclization resulting in the formation of sorbicillin or 2',3'-dihydrosorbicillin. The monooxygenase sor5 oxidizes sorbicillin and 2',3'-dihydrosorbicillin to 2',3'-dihydrosorbicillinol and sorbicillinol, respectively. The oxidoreductase sor8 further converts sorbicillinol into oxosorbicillinol. Sorbicillinol is the building block for the other sorbicillinoids such as disorbicillinol, bisvertinolon, dihydrobisvertinolone, and dihydrotrichotetronine. This chain is FAD-linked oxidoreductase sor8, found in Hypocrea jecorina (strain QM6a) (Trichoderma reesei).